The primary structure comprises 213 residues: Histidine biosynthesis bifunctional protein HisIE (213 aa).

The segment at 1 to 114 (MLTTEKYQGL…FHPALTDFSF (114 aa)) is phosphoribosyl-AMP cyclohydrolase. The phosphoribosyl-ATP pyrophosphohydrolase stretch occupies residues 115-213 (LFQLENIISI…RVRSKLKKKH (99 aa)).

In the N-terminal section; belongs to the PRA-CH family. It in the C-terminal section; belongs to the PRA-PH family.

It is found in the cytoplasm. The catalysed reaction is 1-(5-phospho-beta-D-ribosyl)-ATP + H2O = 1-(5-phospho-beta-D-ribosyl)-5'-AMP + diphosphate + H(+). The enzyme catalyses 1-(5-phospho-beta-D-ribosyl)-5'-AMP + H2O = 1-(5-phospho-beta-D-ribosyl)-5-[(5-phospho-beta-D-ribosylamino)methylideneamino]imidazole-4-carboxamide. It participates in amino-acid biosynthesis; L-histidine biosynthesis; L-histidine from 5-phospho-alpha-D-ribose 1-diphosphate: step 2/9. Its pathway is amino-acid biosynthesis; L-histidine biosynthesis; L-histidine from 5-phospho-alpha-D-ribose 1-diphosphate: step 3/9. This Blochmanniella floridana protein is Histidine biosynthesis bifunctional protein HisIE.